Consider the following 241-residue polypeptide: Uridylate kinase (241 aa).

14 to 17 serves as a coordination point for ATP; sequence KLSG. Residues 22–27 form an involved in allosteric activation by GTP region; sequence GGLGMG. Glycine 56 contributes to the UMP binding site. Residues glycine 57 and arginine 61 each coordinate ATP. Residues aspartate 77 and 138 to 145 contribute to the UMP site; that span reads TGNPFFTT. ATP is bound by residues threonine 165, tyrosine 171, and aspartate 174.

This sequence belongs to the UMP kinase family. In terms of assembly, homohexamer.

Its subcellular location is the cytoplasm. The enzyme catalyses UMP + ATP = UDP + ADP. It functions in the pathway pyrimidine metabolism; CTP biosynthesis via de novo pathway; UDP from UMP (UMPK route): step 1/1. With respect to regulation, allosterically activated by GTP. Inhibited by UTP. Its function is as follows. Catalyzes the reversible phosphorylation of UMP to UDP. This chain is Uridylate kinase, found in Psychrobacter sp. (strain PRwf-1).